Consider the following 150-residue polypeptide: MFEEMILEKVRKEAERIAEEQGLEIFDVQYRRESRGWILRIIIDNPMGYVSVRDCELFSREMERFLDREDLIEHSYTLEVSSPGLDRPLRGPRDYVRFTGKLAKIVTKDGKTFIGRIESFVDGTITISDGKKKYEINIDDVKRANLEVEF.

This sequence belongs to the RimP family.

The protein localises to the cytoplasm. Required for maturation of 30S ribosomal subunits. The chain is Ribosome maturation factor RimP from Thermotoga sp. (strain RQ2).